Reading from the N-terminus, the 205-residue chain is N-(5'-phosphoribosyl)anthranilate isomerase (205 aa).

The protein belongs to the TrpF family.

The enzyme catalyses N-(5-phospho-beta-D-ribosyl)anthranilate = 1-(2-carboxyphenylamino)-1-deoxy-D-ribulose 5-phosphate. It functions in the pathway amino-acid biosynthesis; L-tryptophan biosynthesis; L-tryptophan from chorismate: step 3/5. This is N-(5'-phosphoribosyl)anthranilate isomerase (TRP1) from Zygosaccharomyces bailii.